A 282-amino-acid chain; its full sequence is Pantothenate synthetase (282 aa).

Position 30–37 (30–37 (MGYFHEGH)) interacts with ATP. H37 (proton donor) is an active-site residue. Q61 serves as a coordination point for (R)-pantoate. Beta-alanine is bound at residue Q61. 147-150 (GQKD) provides a ligand contact to ATP. Q153 contacts (R)-pantoate. Residues V176 and 184–187 (LSSR) each bind ATP.

The protein belongs to the pantothenate synthetase family. Homodimer.

Its subcellular location is the cytoplasm. The enzyme catalyses (R)-pantoate + beta-alanine + ATP = (R)-pantothenate + AMP + diphosphate + H(+). Its pathway is cofactor biosynthesis; (R)-pantothenate biosynthesis; (R)-pantothenate from (R)-pantoate and beta-alanine: step 1/1. Functionally, catalyzes the condensation of pantoate with beta-alanine in an ATP-dependent reaction via a pantoyl-adenylate intermediate. In Maridesulfovibrio salexigens (strain ATCC 14822 / DSM 2638 / NCIMB 8403 / VKM B-1763) (Desulfovibrio salexigens), this protein is Pantothenate synthetase.